The primary structure comprises 263 residues: 3-methyl-2-oxobutanoate hydroxymethyltransferase (263 aa).

Residues Asp-45 and Asp-84 each coordinate Mg(2+). 3-methyl-2-oxobutanoate-binding positions include 45–46, Asp-84, and Lys-112; that span reads DS. Mg(2+) is bound at residue Glu-114. Catalysis depends on Glu-180, which acts as the Proton acceptor.

This sequence belongs to the PanB family. Homodecamer; pentamer of dimers. The cofactor is Mg(2+).

The protein resides in the cytoplasm. It carries out the reaction 3-methyl-2-oxobutanoate + (6R)-5,10-methylene-5,6,7,8-tetrahydrofolate + H2O = 2-dehydropantoate + (6S)-5,6,7,8-tetrahydrofolate. The protein operates within cofactor biosynthesis; (R)-pantothenate biosynthesis; (R)-pantoate from 3-methyl-2-oxobutanoate: step 1/2. Its function is as follows. Catalyzes the reversible reaction in which hydroxymethyl group from 5,10-methylenetetrahydrofolate is transferred onto alpha-ketoisovalerate to form ketopantoate. This Citrobacter koseri (strain ATCC BAA-895 / CDC 4225-83 / SGSC4696) protein is 3-methyl-2-oxobutanoate hydroxymethyltransferase.